Consider the following 197-residue polypeptide: Methylamine utilization protein MauD (197 aa).

The chain crosses the membrane as a helical span at residues 3–23; it reads FLIASNILLWIAFLGVTVVML. A Thioredoxin domain is found at 48-180; the sequence is PDIGDMAPEF…LESLLEADKT (133 aa).

The protein resides in the membrane. It functions in the pathway one-carbon metabolism; methylamine degradation. May be specifically involved in the processing, transport, and/or maturation of the MADH beta-subunit. This is Methylamine utilization protein MauD (mauD) from Paracoccus versutus (Thiobacillus versutus).